The chain runs to 102 residues: Small ribosomal subunit protein uS10 (102 aa).

This sequence belongs to the universal ribosomal protein uS10 family. Part of the 30S ribosomal subunit.

Involved in the binding of tRNA to the ribosomes. This Methanothermobacter thermautotrophicus (strain ATCC 29096 / DSM 1053 / JCM 10044 / NBRC 100330 / Delta H) (Methanobacterium thermoautotrophicum) protein is Small ribosomal subunit protein uS10.